A 304-amino-acid polypeptide reads, in one-letter code: Probable 5-dehydro-4-deoxyglucarate dehydratase (304 aa).

It belongs to the DapA family.

The catalysed reaction is 5-dehydro-4-deoxy-D-glucarate + H(+) = 2,5-dioxopentanoate + CO2 + H2O. It functions in the pathway carbohydrate acid metabolism; D-glucarate degradation; 2,5-dioxopentanoate from D-glucarate: step 2/2. In Pseudarthrobacter chlorophenolicus (strain ATCC 700700 / DSM 12829 / CIP 107037 / JCM 12360 / KCTC 9906 / NCIMB 13794 / A6) (Arthrobacter chlorophenolicus), this protein is Probable 5-dehydro-4-deoxyglucarate dehydratase.